A 428-amino-acid polypeptide reads, in one-letter code: Chaperone SurA (428 aa).

Positions 1–20 are cleaved as a signal peptide; that stretch reads MKNWKTLLLGIAMIANTSFA. 2 PpiC domains span residues 171–272 and 282–382; these read STEL…KVND and VTEV…ELLD.

The protein localises to the periplasm. It catalyses the reaction [protein]-peptidylproline (omega=180) = [protein]-peptidylproline (omega=0). Its function is as follows. Chaperone involved in the correct folding and assembly of outer membrane proteins. Recognizes specific patterns of aromatic residues and the orientation of their side chains, which are found more frequently in integral outer membrane proteins. May act in both early periplasmic and late outer membrane-associated steps of protein maturation. This chain is Chaperone SurA, found in Shigella dysenteriae serotype 1 (strain Sd197).